Reading from the N-terminus, the 107-residue chain is Large ribosomal subunit protein uL24 (107 aa).

It belongs to the universal ribosomal protein uL24 family. As to quaternary structure, part of the 50S ribosomal subunit.

Functionally, one of two assembly initiator proteins, it binds directly to the 5'-end of the 23S rRNA, where it nucleates assembly of the 50S subunit. In terms of biological role, one of the proteins that surrounds the polypeptide exit tunnel on the outside of the subunit. In Solidesulfovibrio magneticus (strain ATCC 700980 / DSM 13731 / RS-1) (Desulfovibrio magneticus), this protein is Large ribosomal subunit protein uL24.